The primary structure comprises 260 residues: UPF0246 protein Bamb_2261 (260 aa).

The protein belongs to the UPF0246 family.

This Burkholderia ambifaria (strain ATCC BAA-244 / DSM 16087 / CCUG 44356 / LMG 19182 / AMMD) (Burkholderia cepacia (strain AMMD)) protein is UPF0246 protein Bamb_2261.